A 365-amino-acid chain; its full sequence is DNA replication and repair protein RecF (365 aa).

Gly30 to Thr37 contributes to the ATP binding site.

Belongs to the RecF family.

The protein localises to the cytoplasm. The RecF protein is involved in DNA metabolism; it is required for DNA replication and normal SOS inducibility. RecF binds preferentially to single-stranded, linear DNA. It also seems to bind ATP. The protein is DNA replication and repair protein RecF of Desulfitobacterium hafniense (strain DSM 10664 / DCB-2).